A 248-amino-acid chain; its full sequence is 2,3-bisphosphoglycerate-dependent phosphoglycerate mutase (248 aa).

Residues 10 to 17 (RHGQSEWN), 23 to 24 (TG), Arg-62, 89 to 92 (ERHY), Lys-100, 116 to 117 (RR), and 183 to 184 (GN) contribute to the substrate site. Residue His-11 is the Tele-phosphohistidine intermediate of the active site. The Proton donor/acceptor role is filled by Glu-89.

This sequence belongs to the phosphoglycerate mutase family. BPG-dependent PGAM subfamily.

It carries out the reaction (2R)-2-phosphoglycerate = (2R)-3-phosphoglycerate. It participates in carbohydrate degradation; glycolysis; pyruvate from D-glyceraldehyde 3-phosphate: step 3/5. Catalyzes the interconversion of 2-phosphoglycerate and 3-phosphoglycerate. This is 2,3-bisphosphoglycerate-dependent phosphoglycerate mutase from Corynebacterium diphtheriae (strain ATCC 700971 / NCTC 13129 / Biotype gravis).